A 491-amino-acid polypeptide reads, in one-letter code: Aspartyl/glutamyl-tRNA(Asn/Gln) amidotransferase subunit B (491 aa).

Belongs to the GatB/GatE family. GatB subfamily. As to quaternary structure, heterotrimer of A, B and C subunits.

It carries out the reaction L-glutamyl-tRNA(Gln) + L-glutamine + ATP + H2O = L-glutaminyl-tRNA(Gln) + L-glutamate + ADP + phosphate + H(+). The catalysed reaction is L-aspartyl-tRNA(Asn) + L-glutamine + ATP + H2O = L-asparaginyl-tRNA(Asn) + L-glutamate + ADP + phosphate + 2 H(+). Its function is as follows. Allows the formation of correctly charged Asn-tRNA(Asn) or Gln-tRNA(Gln) through the transamidation of misacylated Asp-tRNA(Asn) or Glu-tRNA(Gln) in organisms which lack either or both of asparaginyl-tRNA or glutaminyl-tRNA synthetases. The reaction takes place in the presence of glutamine and ATP through an activated phospho-Asp-tRNA(Asn) or phospho-Glu-tRNA(Gln). This chain is Aspartyl/glutamyl-tRNA(Asn/Gln) amidotransferase subunit B, found in Prochlorococcus marinus (strain NATL1A).